The primary structure comprises 679 residues: Glycine--tRNA ligase beta subunit (679 aa).

The protein belongs to the class-II aminoacyl-tRNA synthetase family. Tetramer of two alpha and two beta subunits.

The protein localises to the cytoplasm. The catalysed reaction is tRNA(Gly) + glycine + ATP = glycyl-tRNA(Gly) + AMP + diphosphate. In Streptococcus agalactiae serotype V (strain ATCC BAA-611 / 2603 V/R), this protein is Glycine--tRNA ligase beta subunit.